A 313-amino-acid chain; its full sequence is MLKMESTQQMASSIINSSFEAAVVAATSTLELMGIQYDYNEVYTRVKSKFDFVMDDSGVENNLMGKAATIDQALNGKFSSSIRNRNWMTDSKTVARLDEDVNKLRLLLSSKGIDQKMRVLNACFSVKRVPGKSSSVIKCTRLMKEKIERGEVEVDDTFIEERMEIDTIDWKSRYDQLERRFESLKQRVNEKYNNWVIKARKVNENMNSLQNVISQQQAHINELQIYNNKLERDLQSKIGSVISSIEWYLRSMELSDDIKSDIEQQLNSIDLINPVNAFDDFESILRNLISDYDRIFIMFKGLLQQSNYTYTYE.

An RNA-binding region spans residues 1–149 (MLKMESTQQM…TRLMKEKIER (149 aa)). The dimerization stretch occupies residues 150 to 206 (GEVEVDDTFIEERMEIDTIDWKSRYDQLERRFESLKQRVNEKYNNWVIKARKVNENM). A coiled-coil region spans residues 166–237 (DTIDWKSRYD…NKLERDLQSK (72 aa)). The tract at residues 170 to 234 (WKSRYDQLER…IYNNKLERDL (65 aa)) is interaction with host ZC3H7B. The segment at 208 to 313 (SLQNVISQQQ…QQSNYTYTYE (106 aa)) is interaction with host EIF4G1.

It belongs to the rotavirus NSP3 family. As to quaternary structure, homodimer. Interacts (via the coiled-coil region) with host ZC3H7B (via LD motif). Interacts with host EIF4G1.

Its subcellular location is the host cytoplasm. In terms of biological role, plays an important role in stimulating the translation of viral mRNAs. These mRNAs are capped but not polyadenylated, instead terminating in a conserved sequence 'GACC' at the 3' that is recognized by NSP3, which competes with host PABPC1 for EIF4G1 binding. The interaction between NSP3 and host EIF4G1 stabilizes the EIF4E-EIF4G1 interaction, thereby facilitating the initiation of capped mRNA translation. This Rotavirus A (strain RVA/Human/Japan/S2/1980/G2P1B[4]) (RV-A) protein is Non-structural protein 3.